A 786-amino-acid chain; its full sequence is Endonuclease MutS2 (786 aa).

Glycine 335–threonine 342 is a binding site for ATP. The 76-residue stretch at leucine 711 to lysine 786 folds into the Smr domain.

It belongs to the DNA mismatch repair MutS family. MutS2 subfamily. As to quaternary structure, homodimer. Binds to stalled ribosomes, contacting rRNA.

Endonuclease that is involved in the suppression of homologous recombination and thus may have a key role in the control of bacterial genetic diversity. Functionally, acts as a ribosome collision sensor, splitting the ribosome into its 2 subunits. Detects stalled/collided 70S ribosomes which it binds and splits by an ATP-hydrolysis driven conformational change. Acts upstream of the ribosome quality control system (RQC), a ribosome-associated complex that mediates the extraction of incompletely synthesized nascent chains from stalled ribosomes and their subsequent degradation. Probably generates substrates for RQC. This chain is Endonuclease MutS2, found in Bacillus cytotoxicus (strain DSM 22905 / CIP 110041 / 391-98 / NVH 391-98).